A 571-amino-acid polypeptide reads, in one-letter code: Dihydroxy-acid dehydratase (571 aa).

Cys56 is a [2Fe-2S] cluster binding site. Asp88 contacts Mg(2+). Cys129 is a [2Fe-2S] cluster binding site. Residues Asp130 and Lys131 each coordinate Mg(2+). Position 131 is an N6-carboxylysine (Lys131). Cys201 lines the [2Fe-2S] cluster pocket. Glu452 provides a ligand contact to Mg(2+). The Proton acceptor role is filled by Ser478.

The protein belongs to the IlvD/Edd family. As to quaternary structure, homodimer. Requires [2Fe-2S] cluster as cofactor. Mg(2+) serves as cofactor.

The enzyme catalyses (2R)-2,3-dihydroxy-3-methylbutanoate = 3-methyl-2-oxobutanoate + H2O. It catalyses the reaction (2R,3R)-2,3-dihydroxy-3-methylpentanoate = (S)-3-methyl-2-oxopentanoate + H2O. It functions in the pathway amino-acid biosynthesis; L-isoleucine biosynthesis; L-isoleucine from 2-oxobutanoate: step 3/4. Its pathway is amino-acid biosynthesis; L-valine biosynthesis; L-valine from pyruvate: step 3/4. Functions in the biosynthesis of branched-chain amino acids. Catalyzes the dehydration of (2R,3R)-2,3-dihydroxy-3-methylpentanoate (2,3-dihydroxy-3-methylvalerate) into 2-oxo-3-methylpentanoate (2-oxo-3-methylvalerate) and of (2R)-2,3-dihydroxy-3-methylbutanoate (2,3-dihydroxyisovalerate) into 2-oxo-3-methylbutanoate (2-oxoisovalerate), the penultimate precursor to L-isoleucine and L-valine, respectively. The protein is Dihydroxy-acid dehydratase of Streptococcus suis (strain 98HAH33).